Reading from the N-terminus, the 196-residue chain is Ribonuclease HII (196 aa).

One can recognise an RNase H type-2 domain in the interval 1–196; that stretch reads MVTIGVDEAG…FAPVAQLQLL (196 aa). A divalent metal cation contacts are provided by aspartate 7, glutamate 8, and aspartate 103.

The protein belongs to the RNase HII family. Requires Mn(2+) as cofactor. Mg(2+) is required as a cofactor.

It is found in the cytoplasm. It carries out the reaction Endonucleolytic cleavage to 5'-phosphomonoester.. Endonuclease that specifically degrades the RNA of RNA-DNA hybrids. In Novosphingobium aromaticivorans (strain ATCC 700278 / DSM 12444 / CCUG 56034 / CIP 105152 / NBRC 16084 / F199), this protein is Ribonuclease HII.